Reading from the N-terminus, the 268-residue chain is tRNA pseudouridine synthase A (268 aa).

The active-site Nucleophile is Asp52. Substrate is bound at residue Tyr110.

This sequence belongs to the tRNA pseudouridine synthase TruA family. In terms of assembly, homodimer.

It carries out the reaction uridine(38/39/40) in tRNA = pseudouridine(38/39/40) in tRNA. Formation of pseudouridine at positions 38, 39 and 40 in the anticodon stem and loop of transfer RNAs. This is tRNA pseudouridine synthase A from Prochlorococcus marinus (strain MIT 9312).